A 584-amino-acid polypeptide reads, in one-letter code: ATP-dependent lipid A-core flippase 2 (584 aa).

6 helical membrane-spanning segments follow: residues 32 to 52 (IFIALAGLCLFSFVDAGMIYF), 68 to 88 (TLQLGALLVVAIFFLRGIASF), 146 to 166 (SAVVIAIRESVIILVLFSMMV), 167 to 187 (YNSWQLTAIFLVIVPIIALII), 254 to 274 (AISNPVIQLIASFAIAAVLLL), and 280 to 300 (VLNQLTPGSFTLILIAMGSLL). An ABC transmembrane type-1 domain is found at 33-315 (FIALAGLCLF…LSNINQQLQK (283 aa)). The ABC transporter domain maps to 347 to 583 (IRFNNFSFTY…AGYYQSLYQS (237 aa)). 381-388 (GESGSGKS) is an ATP binding site.

It belongs to the ABC transporter superfamily. Lipid exporter (TC 3.A.1.106) family. Homodimer.

The protein localises to the cell inner membrane. The catalysed reaction is ATP + H2O + lipid A-core oligosaccharideSide 1 = ADP + phosphate + lipid A-core oligosaccharideSide 2.. Functionally, involved in lipopolysaccharide (LPS) biosynthesis. Translocates lipid A-core from the inner to the outer leaflet of the inner membrane. Transmembrane domains (TMD) form a pore in the inner membrane and the ATP-binding domain (NBD) is responsible for energy generation. This chain is ATP-dependent lipid A-core flippase 2, found in Colwellia psychrerythraea (strain 34H / ATCC BAA-681) (Vibrio psychroerythus).